A 125-amino-acid chain; its full sequence is Small ribosomal subunit protein uS12 (125 aa).

Residues 1–28 form a disordered region; the sequence is MPTISQLIGSERKRLTRKTKSPALKSCP. A 3-methylthioaspartic acid modification is found at aspartate 89. Residues 104–125 form a disordered region; sequence TAGVKDRRQSRSKYGAKAPKND.

The protein belongs to the universal ribosomal protein uS12 family. In terms of assembly, part of the 30S ribosomal subunit. Contacts proteins S8 and S17. May interact with IF1 in the 30S initiation complex.

Its function is as follows. With S4 and S5 plays an important role in translational accuracy. In terms of biological role, interacts with and stabilizes bases of the 16S rRNA that are involved in tRNA selection in the A site and with the mRNA backbone. Located at the interface of the 30S and 50S subunits, it traverses the body of the 30S subunit contacting proteins on the other side and probably holding the rRNA structure together. The combined cluster of proteins S8, S12 and S17 appears to hold together the shoulder and platform of the 30S subunit. The chain is Small ribosomal subunit protein uS12 from Prochlorococcus marinus subsp. pastoris (strain CCMP1986 / NIES-2087 / MED4).